Consider the following 765-residue polypeptide: Probable exo-1,4-beta-xylosidase bxlB (765 aa).

Residues 1 to 25 form the signal peptide; the sequence is MYSSNSRRAASILACIVSLTQLGFA. 2 N-linked (GlcNAc...) asparagine glycosylation sites follow: Asn67 and Asn107. Residue Asp293 is part of the active site. N-linked (GlcNAc...) asparagine glycans are attached at residues Asn345, Asn412, Asn423, Asn464, and Asn761.

It belongs to the glycosyl hydrolase 3 family.

It localises to the secreted. It catalyses the reaction Hydrolysis of (1-&gt;4)-beta-D-xylans, to remove successive D-xylose residues from the non-reducing termini.. It participates in glycan degradation; xylan degradation. Functionally, xylan 1,4-beta-xylosidase involved in the hydrolysis of xylan, a major structural heterogeneous polysaccharide found in plant biomass representing the second most abundant polysaccharide in the biosphere, after cellulose. The sequence is that of Probable exo-1,4-beta-xylosidase bxlB (bxlB) from Aspergillus terreus (strain NIH 2624 / FGSC A1156).